A 61-amino-acid polypeptide reads, in one-letter code: Large ribosomal subunit protein uL30 (61 aa).

This sequence belongs to the universal ribosomal protein uL30 family. Part of the 50S ribosomal subunit.

The chain is Large ribosomal subunit protein uL30 from Shewanella halifaxensis (strain HAW-EB4).